A 1843-amino-acid chain; its full sequence is Xin actin-binding repeat-containing protein 1 (1843 aa).

Polar residues predominate over residues 1–10 (MADTQTQVAP). A disordered region spans residues 1 to 48 (MADTQTQVAPTPTMRMATAEDLPLPPPPALEDLPLPPPKESFSKFHQQ). Positions 1–54 (MADTQTQVAPTPTMRMATAEDLPLPPPPALEDLPLPPPKESFSKFHQQRQASEL) are interaction with VASP. Over residues 23 to 39 (PLPPPPALEDLPLPPPK) the composition is skewed to pro residues. Xin repeat units follow at residues 89-104 (GDVQ…WRLD), 121-136 (GDVQ…GSFA), 151-166 (GDVR…KPLD), and 186-201 (GDVQ…RPLD). Positions 132–151 (EGSFANSTDQEPTRPQPGGG) are disordered. 3 positions are modified to phosphoserine: Ser-205, Ser-208, and Ser-213. Xin repeat units lie at residues 226 to 241 (GDVK…EPLC) and 264 to 279 (NAVR…RPLD). Ser-295 carries the post-translational modification Phosphoserine. The Xin 7 repeat unit spans residues 302-317 (PDVSATRWIFETQPLD). Position 332 is a phosphoserine (Ser-332). Xin repeat units follow at residues 340 to 355 (PDVQ…RALD) and 376 to 391 (GDVR…KPLD). The disordered stretch occupies residues 406 to 432 (DPQDGEGHLSSDSSSALPFSQSAPQRD). Low complexity predominate over residues 415-429 (SSDSSSALPFSQSAP). The stretch at 436–451 (GDVKTFKNLFETLPLD) is one Xin 10 repeat. A disordered region spans residues 455–479 (QGEVLAHGSPSREEGTDSAGQAQGI). 2 Xin repeats span residues 507 to 522 (GDVQ…QPLD) and 545 to 560 (GDVG…QPLE). The tract at residues 531–632 (IDVVRGITRQ…AQSCTWMFKP (102 aa)) is interaction with CTNNB1. Residues 564–577 (QREQQERQKEEGKS) are compositionally biased toward basic and acidic residues. The disordered stretch occupies residues 564–591 (QREQQERQKEEGKSQGDPQPEAPPKGDV). 5 Xin repeats span residues 589–604 (GDVQ…CPMS), 621–636 (AEAQ…QPVD), 654–669 (GERQ…EPLQ), 691–706 (GQVS…LEAG), and 723–738 (GSVH…CPMG). Disordered regions lie at residues 943–999 (SLRW…QAIG), 1063–1205 (AEAQ…MAWG), 1238–1277 (SGPQ…HRAE), 1289–1471 (DPLL…QKEL), and 1561–1696 (MSSL…DVSV). Composition is skewed to polar residues over residues 1064 to 1073 (EAQSLHQQVL) and 1080 to 1089 (PTPTATSNPI). Positions 1294-1311 (SHSSPAGQRTPGGSQTKT) are enriched in polar residues. Over residues 1357–1368 (GQREHQRGERDT) the composition is skewed to basic and acidic residues. Residues 1393 to 1424 (GHSQPSLQHGLSTTAPRPTKNQATGSNAQSSE) are compositionally biased toward polar residues. Residues 1462–1490 (DSLQRNQKELQGLLNQVQALEKEAASSVD) adopt a coiled-coil conformation. Polar residues-rich tracts occupy residues 1588–1600 (VTVS…SGSG) and 1663–1679 (SRDS…QSAT). An interaction with FLNC region spans residues 1685 to 1843 (TPSFKGNPDV…SCSYSQPAAQ (159 aa)).

This sequence belongs to the Xin family. Interacts (via N-terminus) with CTTN; the interaction promotes CTTN localization to intercalated disks in cardiomyocytes. Interacts with CTNNB1. Interacts with FLNC and VASP. Interacts with F-actin. As to expression, expressed in skeletal muscle at areas of Z-disk disruption in a longitudinal pattern spanning one or more sarcomeres (at protein level). In terms of tissue distribution, expressed in the heart (at protein level). Expressed in the heart.

The protein localises to the cell junction. Its subcellular location is the adherens junction. It localises to the desmosome. Functionally, protects actin filaments from depolymerization. Required for correct cardiac intercalated disk ultrastructure via maintenance of cell-cell adhesion stability, and as a result maintains cardiac organ morphology, conductance and heart beat rhythm. Required for development of normal skeletal muscle morphology and muscle fiber type composition. Plays a role in regulating muscle satellite cell activation and survival, as a result promotes muscle fiber recovery from injury and fatigue. This chain is Xin actin-binding repeat-containing protein 1, found in Homo sapiens (Human).